The following is a 660-amino-acid chain: Bifunctional polymyxin resistance protein ArnA (660 aa).

The segment at 1 to 304 (MKTVVFAYHD…TLGLVQGSRL (304 aa)) is formyltransferase ArnAFT. 86 to 88 (HLI) contacts (6R)-10-formyltetrahydrofolate. The active-site Proton donor; for formyltransferase activity is His104. (6R)-10-formyltetrahydrofolate contacts are provided by residues Arg114 and 136–140 (VKRAD). The tract at residues 314–660 (RRTRVLILGV…RTVDLTDKPS (347 aa)) is dehydrogenase ArnADH. Residues Asp347 and 368–369 (DI) contribute to the NAD(+) site. Residues Ala393, Tyr398, and 432–433 (TS) each bind UDP-alpha-D-glucuronate. The active-site Proton acceptor; for decarboxylase activity is Glu434. UDP-alpha-D-glucuronate is bound by residues Arg460, Asn492, 526-535 (KLIDGGKQKR), and Tyr613. Arg619 functions as the Proton donor; for decarboxylase activity in the catalytic mechanism.

In the N-terminal section; belongs to the Fmt family. UDP-L-Ara4N formyltransferase subfamily. This sequence in the C-terminal section; belongs to the NAD(P)-dependent epimerase/dehydratase family. UDP-glucuronic acid decarboxylase subfamily. In terms of assembly, homohexamer, formed by a dimer of trimers.

The enzyme catalyses UDP-alpha-D-glucuronate + NAD(+) = UDP-beta-L-threo-pentopyranos-4-ulose + CO2 + NADH. It carries out the reaction UDP-4-amino-4-deoxy-beta-L-arabinose + (6R)-10-formyltetrahydrofolate = UDP-4-deoxy-4-formamido-beta-L-arabinose + (6S)-5,6,7,8-tetrahydrofolate + H(+). It participates in nucleotide-sugar biosynthesis; UDP-4-deoxy-4-formamido-beta-L-arabinose biosynthesis; UDP-4-deoxy-4-formamido-beta-L-arabinose from UDP-alpha-D-glucuronate: step 1/3. Its pathway is nucleotide-sugar biosynthesis; UDP-4-deoxy-4-formamido-beta-L-arabinose biosynthesis; UDP-4-deoxy-4-formamido-beta-L-arabinose from UDP-alpha-D-glucuronate: step 3/3. It functions in the pathway bacterial outer membrane biogenesis; lipopolysaccharide biosynthesis. In terms of biological role, bifunctional enzyme that catalyzes the oxidative decarboxylation of UDP-glucuronic acid (UDP-GlcUA) to UDP-4-keto-arabinose (UDP-Ara4O) and the addition of a formyl group to UDP-4-amino-4-deoxy-L-arabinose (UDP-L-Ara4N) to form UDP-L-4-formamido-arabinose (UDP-L-Ara4FN). The modified arabinose is attached to lipid A and is required for resistance to polymyxin and cationic antimicrobial peptides. The sequence is that of Bifunctional polymyxin resistance protein ArnA from Escherichia coli O127:H6 (strain E2348/69 / EPEC).